The following is a 214-amino-acid chain: ATP-dependent Clp protease proteolytic subunit (214 aa).

Ser-114 (nucleophile) is an active-site residue. Residue His-139 is part of the active site.

Belongs to the peptidase S14 family. Fourteen ClpP subunits assemble into 2 heptameric rings which stack back to back to give a disk-like structure with a central cavity, resembling the structure of eukaryotic proteasomes.

It is found in the cytoplasm. The enzyme catalyses Hydrolysis of proteins to small peptides in the presence of ATP and magnesium. alpha-casein is the usual test substrate. In the absence of ATP, only oligopeptides shorter than five residues are hydrolyzed (such as succinyl-Leu-Tyr-|-NHMec, and Leu-Tyr-Leu-|-Tyr-Trp, in which cleavage of the -Tyr-|-Leu- and -Tyr-|-Trp bonds also occurs).. Its function is as follows. Cleaves peptides in various proteins in a process that requires ATP hydrolysis. Has a chymotrypsin-like activity. Plays a major role in the degradation of misfolded proteins. The protein is ATP-dependent Clp protease proteolytic subunit of Nitrosomonas europaea (strain ATCC 19718 / CIP 103999 / KCTC 2705 / NBRC 14298).